The sequence spans 400 residues: Argininosuccinate synthase (400 aa).

8–16 (AYSGGLDTS) provides a ligand contact to ATP. Y87 and S92 together coordinate L-citrulline. Residue G117 participates in ATP binding. L-aspartate-binding residues include T119, N123, and D124. L-citrulline is bound at residue N123. 4 residues coordinate L-citrulline: R127, S175, E259, and Y271.

This sequence belongs to the argininosuccinate synthase family. Type 1 subfamily. As to quaternary structure, homotetramer.

The protein localises to the cytoplasm. The enzyme catalyses L-citrulline + L-aspartate + ATP = 2-(N(omega)-L-arginino)succinate + AMP + diphosphate + H(+). It participates in amino-acid biosynthesis; L-arginine biosynthesis; L-arginine from L-ornithine and carbamoyl phosphate: step 2/3. The polypeptide is Argininosuccinate synthase (Frankia alni (strain DSM 45986 / CECT 9034 / ACN14a)).